We begin with the raw amino-acid sequence, 290 residues long: 33 kDa chaperonin (290 aa).

2 disulfide bridges follow: cysteine 235–cysteine 237 and cysteine 268–cysteine 271.

This sequence belongs to the HSP33 family. Under oxidizing conditions two disulfide bonds are formed involving the reactive cysteines. Under reducing conditions zinc is bound to the reactive cysteines and the protein is inactive.

The protein localises to the cytoplasm. Its function is as follows. Redox regulated molecular chaperone. Protects both thermally unfolding and oxidatively damaged proteins from irreversible aggregation. Plays an important role in the bacterial defense system toward oxidative stress. In Streptococcus pneumoniae serotype 19F (strain G54), this protein is 33 kDa chaperonin.